The primary structure comprises 318 residues: Transcription factor zip-4 (318 aa).

The segment covering 1–13 (MYNYNYSRGNKSM) has biased composition (polar residues). Disordered stretches follow at residues 1–20 (MYNYNYSRGNKSMGNPPRFH), 147–205 (EKKP…TAAA), 238–257 (NNDAVRKSRNKAKELQLQKD), and 273–318 (ELQS…KSNY). The segment covering 173 to 190 (DYQEEGETSLSDNDESVD) has biased composition (acidic residues). The bZIP domain maps to 228–291 (EPIYKLKRAR…ERDQQLIKQL (64 aa)). A basic motif region spans residues 232 to 266 (KLKRARNNDAVRKSRNKAKELQLQKDEEYDEMKKR). Positions 242–280 (VRKSRNKAKELQLQKDEEYDEMKKRITQLEAELQSEREG) form a coiled coil. The interval 267 to 274 (ITQLEAEL) is leucine-zipper. The segment covering 275–298 (QSEREGRERDQQLIKQLIREKEST) has biased composition (basic and acidic residues). Residues 307–318 (RNALESFNKSNY) show a composition bias toward polar residues.

This sequence belongs to the bZIP family. C/EBP subfamily.

Its subcellular location is the nucleus. Functionally, transcription factor that binds to the promoter and the enhancer regions of target genes. Involved in responding to mitochondrial damage. Has a protective role in response to infection by the Gram-negative bacterium P.aeruginosa. The sequence is that of Transcription factor zip-4 from Caenorhabditis elegans.